The chain runs to 299 residues: MSSEPSSAAPESTIPRRIALSLQYEGSAFCGWQRQRNGNSVQAQLEAAIEQLDPYRPIQTFAAGRTDTGVHAAGQVVHFDCGDRIPPAKWAPALNGRLPFTIRVRESVLRPKDWHACYSATYRRYRYTIHNGRRPNLFLAPWSWHRYQLRLDESRMRDALNGMLGLHDFSAFMRAGSRRAHARTTVQEVDLVRQGDMVRVEIQASGFLYGMVRLLIAQLVAVGEHRLSVQDFEQRWRQRRRHEVREAAPGHGLCLLRAGYEQEIFTRAGWYDCQPWFFLAESDPPPDPPPLPEASGSEL.

Aspartate 67 functions as the Nucleophile in the catalytic mechanism. Residue tyrosine 125 participates in substrate binding.

It belongs to the tRNA pseudouridine synthase TruA family. Homodimer.

The enzyme catalyses uridine(38/39/40) in tRNA = pseudouridine(38/39/40) in tRNA. Formation of pseudouridine at positions 38, 39 and 40 in the anticodon stem and loop of transfer RNAs. This Parasynechococcus marenigrum (strain WH8102) protein is tRNA pseudouridine synthase A.